A 168-amino-acid polypeptide reads, in one-letter code: Phospholipase A and acyltransferase 1 (168 aa).

The Cytoplasmic portion of the chain corresponds to 1-138 (MAFNDCFSLN…GEGVSEQANR (138 aa)). Positions 20-135 (LIEVFRPGYQ…LRYGEGVSEQ (116 aa)) constitute an LRAT domain. His30 is a catalytic residue. Cys119 serves as the catalytic Acyl-thioester intermediate. The helical transmembrane segment at 139 to 159 (AISTVEFVTAAVGVFSFLGLF) threads the bilayer. At 160-168 (PKGQRAKYY) the chain is on the lumenal side.

The protein belongs to the H-rev107 family. Abundantly expressed in testis, skeletal muscle, brain, and heart. As to expression, highly expressed in the testis, skeletal muscle, brain, heart, and thyroid.

The protein localises to the membrane. Its subcellular location is the cytoplasm. It localises to the nucleus. The enzyme catalyses a 1,2-diacyl-sn-glycero-3-phosphocholine + H2O = a 1-acyl-sn-glycero-3-phosphocholine + a fatty acid + H(+). The catalysed reaction is a 1,2-diacyl-sn-glycero-3-phosphocholine + H2O = a 2-acyl-sn-glycero-3-phosphocholine + a fatty acid + H(+). It catalyses the reaction 1,2-dihexadecanoyl-sn-glycero-3-phosphocholine + H2O = 2-hexadecanoyl-sn-glycero-3-phosphocholine + hexadecanoate + H(+). It carries out the reaction 1,2-dihexadecanoyl-sn-glycero-3-phosphocholine + H2O = 1-hexadecanoyl-sn-glycero-3-phosphocholine + hexadecanoate + H(+). The enzyme catalyses 1-hexadecanoyl-2-(5Z,8Z,11Z,14Z-eicosatetraenoyl)-sn-glycero-3-phosphoethanolamine + H2O = 2-(5Z,8Z,11Z,14Z)-eicosatetraenoyl-sn-glycero-3-phosphoethanolamine + hexadecanoate + H(+). The catalysed reaction is 1-hexadecanoyl-2-(5Z,8Z,11Z,14Z-eicosatetraenoyl)-sn-glycero-3-phosphoethanolamine + H2O = 1-hexadecanoyl-sn-glycero-3-phosphoethanolamine + (5Z,8Z,11Z,14Z)-eicosatetraenoate + H(+). It catalyses the reaction 1,2-di-(9Z-octadecenoyl)-sn-glycero-3-phosphoethanolamine + 1,2-dihexadecanoyl-sn-glycero-3-phosphocholine = hexadecanoyl-sn-glycero-3-phosphocholine + N-hexadecanoyl-1,2-di-(9Z-octadecenoyl)-sn-glycero-3-phosphoethanolamine + H(+). It carries out the reaction 1,2-dihexadecanoyl-sn-glycero-3-phosphocholine + a 2-acyl-sn-glycero-3-phosphocholine = a 1-hexadecanoyl-2-acyl-sn-glycero-3-phosphocholine + 2-hexadecanoyl-sn-glycero-3-phosphocholine. Functionally, exhibits both phospholipase A1/2 and acyltransferase activities. Shows phospholipase A1 (PLA1) and A2 (PLA2) activity, catalyzing the calcium-independent release of fatty acids from the sn-1 or sn-2 position of glycerophospholipids. Shows O-acyltransferase activity, catalyzing the transfer of a fatty acyl group from glycerophospholipid to the hydroxyl group of lysophospholipid. Shows N-acyltransferase activity, catalyzing the calcium-independent transfer of a fatty acyl group at the sn-1 position of phosphatidylcholine (PC) and other glycerophospholipids to the primary amine of phosphatidylethanolamine (PE), forming N-acylphosphatidylethanolamine (NAPE) which serves as precursor for N-acylethanolamines (NAEs). In Homo sapiens (Human), this protein is Phospholipase A and acyltransferase 1.